Here is a 90-residue protein sequence, read N- to C-terminus: Large ribosomal subunit protein uL23c (90 aa).

The protein belongs to the universal ribosomal protein uL23 family. As to quaternary structure, part of the 50S ribosomal subunit.

The protein localises to the plastid. Its subcellular location is the chloroplast. Binds to 23S rRNA. The polypeptide is Large ribosomal subunit protein uL23c (rpl23) (Psilotum nudum (Whisk fern)).